Here is a 708-residue protein sequence, read N- to C-terminus: Exocyst complex component 5 (708 aa).

At Ala2 the chain carries N-acetylalanine. Residues 40–101 (KRLLEEFVNH…AFQHFQELDE (62 aa)) are a coiled coil. Phosphothreonine is present on residues Thr122, Thr395, and Thr405. Position 412 is a phosphoserine (Ser412).

Belongs to the SEC10 family. In terms of assembly, the exocyst complex is composed of EXOC1, EXOC2, EXOC3, EXOC4, EXOC5, EXOC6, EXOC7 and EXOC8. Interacts with EXOC3L1.

The protein localises to the cytoplasm. The protein resides in the midbody. Its function is as follows. Component of the exocyst complex involved in the docking of exocytic vesicles with fusion sites on the plasma membrane. The polypeptide is Exocyst complex component 5 (Exoc5) (Mus musculus (Mouse)).